The following is a 193-amino-acid chain: Ion-translocating oxidoreductase complex subunit B (193 aa).

Positions Met1–Ala26 are hydrophobic. Residues Glu32–Val90 enclose the 4Fe-4S domain. Positions 49, 52, 57, 73, 114, 117, 120, 124, 144, 147, 150, and 154 each coordinate [4Fe-4S] cluster. 2 4Fe-4S ferredoxin-type domains span residues Lys105–Lys134 and Met136–Val164.

The protein belongs to the 4Fe4S bacterial-type ferredoxin family. RnfB subfamily. In terms of assembly, the complex is composed of six subunits: RnfA, RnfB, RnfC, RnfD, RnfE and RnfG. It depends on [4Fe-4S] cluster as a cofactor.

Its subcellular location is the cell inner membrane. Its function is as follows. Part of a membrane-bound complex that couples electron transfer with translocation of ions across the membrane. This Shewanella sp. (strain ANA-3) protein is Ion-translocating oxidoreductase complex subunit B.